A 286-amino-acid polypeptide reads, in one-letter code: NH(3)-dependent NAD(+) synthetase (286 aa).

43–50 (GVSGGVDS) is an ATP binding site. Asp49 lines the Mg(2+) pocket. A deamido-NAD(+)-binding site is contributed by Arg131. Thr151 contacts ATP. Glu156 lines the Mg(2+) pocket. Deamido-NAD(+) is bound by residues Lys164 and Asp171. ATP-binding residues include Lys180 and Ser202. Positions 257-286 (HEASSHKRSPPASPDLGEIKKHYKQHAGKK) are disordered. Position 262-263 (262-263 (HK)) interacts with deamido-NAD(+). Residues 277 to 286 (KHYKQHAGKK) show a composition bias toward basic residues.

Belongs to the NAD synthetase family. Homodimer.

The catalysed reaction is deamido-NAD(+) + NH4(+) + ATP = AMP + diphosphate + NAD(+) + H(+). It functions in the pathway cofactor biosynthesis; NAD(+) biosynthesis; NAD(+) from deamido-NAD(+) (ammonia route): step 1/1. Its function is as follows. Catalyzes the ATP-dependent amidation of deamido-NAD to form NAD. Uses ammonia as a nitrogen source. The chain is NH(3)-dependent NAD(+) synthetase from Aeropyrum pernix (strain ATCC 700893 / DSM 11879 / JCM 9820 / NBRC 100138 / K1).